The sequence spans 317 residues: Transcription cofactor vestigial-like protein 2 (317 aa).

Disordered regions lie at residues 41–76, 108–128, 191–214, and 253–293; these read CNAS…ERPP, SQPS…SSGP, TEPW…GGAL, and RLAT…PSGD. A compositionally biased stretch (low complexity) spans 44–57; it reads SPSSSGSGSSSFSS. The segment covering 63-76 has biased composition (basic and acidic residues); the sequence is IKEEEGSPEKERPP. A compositionally biased stretch (low complexity) spans 108-120; that stretch reads SQPSSYSPSCTSS. The span at 196–206 shows a compositional bias: basic residues; the sequence is HAHPHHAHPHH. Residues 272-292 show a composition bias toward low complexity; the sequence is KGEPAGAAWAGPGGPFASPSG.

Belongs to the vestigial family. Interacts with TEFs. Binds to TEAD1/TEF1. Skeletal muscle.

It is found in the nucleus. Functionally, may act as a specific coactivator for the mammalian TEFs. May play a role in the development of skeletal muscles. The protein is Transcription cofactor vestigial-like protein 2 (VGLL2) of Homo sapiens (Human).